We begin with the raw amino-acid sequence, 442 residues long: Putative mannan endo-1,6-alpha-mannosidase C970.02 (442 aa).

Positions 1-19 (MSLTIFISLATILFSFAEA) are cleaved as a signal peptide. N-linked (GlcNAc...) asparagine glycans are attached at residues Asn25, Asn82, Asn107, Asn131, Asn201, Asn236, Asn261, Asn264, Asn277, and Asn361.

Belongs to the glycosyl hydrolase 76 family.

It carries out the reaction Random hydrolysis of (1-&gt;6)-alpha-D-mannosidic linkages in unbranched (1-&gt;6)-mannans.. This chain is Putative mannan endo-1,6-alpha-mannosidase C970.02, found in Schizosaccharomyces pombe (strain 972 / ATCC 24843) (Fission yeast).